The sequence spans 398 residues: Acetate kinase (398 aa).

Asn-10 serves as a coordination point for Mg(2+). Lys-17 contributes to the ATP binding site. Arg-91 serves as a coordination point for substrate. Asp-148 serves as the catalytic Proton donor/acceptor. ATP contacts are provided by residues 208–212, 283–285, and 331–335; these read HLGNG, DCR, and GIGEN. Glu-385 lines the Mg(2+) pocket.

It belongs to the acetokinase family. As to quaternary structure, homodimer. The cofactor is Mg(2+). Mn(2+) is required as a cofactor.

The protein localises to the cytoplasm. It carries out the reaction acetate + ATP = acetyl phosphate + ADP. It participates in metabolic intermediate biosynthesis; acetyl-CoA biosynthesis; acetyl-CoA from acetate: step 1/2. Catalyzes the formation of acetyl phosphate from acetate and ATP. Can also catalyze the reverse reaction. The protein is Acetate kinase of Shewanella woodyi (strain ATCC 51908 / MS32).